The following is a 286-amino-acid chain: uncharacterized protein (286 aa).

This sequence belongs to the chlamydial CPn_0389/CT_041/TC_0311 family.

This is an uncharacterized protein from Chlamydia muridarum (strain MoPn / Nigg).